A 474-amino-acid chain; its full sequence is tRNA-2-methylthio-N(6)-dimethylallyladenosine synthase (474 aa).

The region spanning 3-120 (KKLHIKTWGC…LPEMINHVQG (118 aa)) is the MTTase N-terminal domain. 6 residues coordinate [4Fe-4S] cluster: cysteine 12, cysteine 49, cysteine 83, cysteine 157, cysteine 161, and cysteine 164. Residues 143 to 375 (RAEGPTAFVS…QQRITQQAME (233 aa)) enclose the Radical SAM core domain. In terms of domain architecture, TRAM spans 378–441 (REMVGTVQRI…ASSLRGILLR (64 aa)).

This sequence belongs to the methylthiotransferase family. MiaB subfamily. As to quaternary structure, monomer. The cofactor is [4Fe-4S] cluster.

It localises to the cytoplasm. The catalysed reaction is N(6)-dimethylallyladenosine(37) in tRNA + (sulfur carrier)-SH + AH2 + 2 S-adenosyl-L-methionine = 2-methylsulfanyl-N(6)-dimethylallyladenosine(37) in tRNA + (sulfur carrier)-H + 5'-deoxyadenosine + L-methionine + A + S-adenosyl-L-homocysteine + 2 H(+). Its function is as follows. Catalyzes the methylthiolation of N6-(dimethylallyl)adenosine (i(6)A), leading to the formation of 2-methylthio-N6-(dimethylallyl)adenosine (ms(2)i(6)A) at position 37 in tRNAs that read codons beginning with uridine. This Yersinia enterocolitica serotype O:8 / biotype 1B (strain NCTC 13174 / 8081) protein is tRNA-2-methylthio-N(6)-dimethylallyladenosine synthase.